The chain runs to 360 residues: Ribosomal RNA large subunit methyltransferase M (360 aa).

S-adenosyl-L-methionine-binding positions include S192, 225 to 228, D244, D264, and D280; that span reads APGG. The Proton acceptor role is filled by K309.

Belongs to the class I-like SAM-binding methyltransferase superfamily. RNA methyltransferase RlmE family. RlmM subfamily. Monomer.

The protein localises to the cytoplasm. It carries out the reaction cytidine(2498) in 23S rRNA + S-adenosyl-L-methionine = 2'-O-methylcytidine(2498) in 23S rRNA + S-adenosyl-L-homocysteine + H(+). In terms of biological role, catalyzes the 2'-O-methylation at nucleotide C2498 in 23S rRNA. This Alkalilimnicola ehrlichii (strain ATCC BAA-1101 / DSM 17681 / MLHE-1) protein is Ribosomal RNA large subunit methyltransferase M.